A 443-amino-acid chain; its full sequence is ATP-dependent protease ATPase subunit HslU (443 aa).

Residues Ile-20, 62–67 (GVGKTE), Asp-255, Glu-321, and Arg-393 contribute to the ATP site.

It belongs to the ClpX chaperone family. HslU subfamily. A double ring-shaped homohexamer of HslV is capped on each side by a ring-shaped HslU homohexamer. The assembly of the HslU/HslV complex is dependent on binding of ATP.

The protein resides in the cytoplasm. ATPase subunit of a proteasome-like degradation complex; this subunit has chaperone activity. The binding of ATP and its subsequent hydrolysis by HslU are essential for unfolding of protein substrates subsequently hydrolyzed by HslV. HslU recognizes the N-terminal part of its protein substrates and unfolds these before they are guided to HslV for hydrolysis. The polypeptide is ATP-dependent protease ATPase subunit HslU (Helicobacter pylori (strain J99 / ATCC 700824) (Campylobacter pylori J99)).